A 441-amino-acid chain; its full sequence is Damage-control phosphatase ARMT1 (441 aa).

Alanine 2 carries the post-translational modification N-acetylalanine. Lysine 40 carries the post-translational modification N6-acetyllysine. Serine 102 is subject to Phosphoserine. The Mn(2+) site is built by aspartate 253 and asparagine 254. 253–254 (DN) serves as a coordination point for substrate. Positions 258 and 291 each coordinate S-adenosyl-L-methionine. Aspartate 291 contributes to the Mn(2+) binding site. Substrate-binding positions include 367–371 (DLNYR) and lysine 404. Positions 401–404 (RTLK) match the Subfamily III RTxK motif motif.

The protein belongs to the damage-control phosphatase family. Sugar phosphate phosphatase III subfamily. Mn(2+) serves as cofactor. Requires Ni(2+) as cofactor. Post-translationally, automethylated.

It catalyses the reaction beta-D-fructose 1-phosphate + H2O = D-fructose + phosphate. The catalysed reaction is beta-D-fructose 6-phosphate = dihydroxyacetone + D-glyceraldehyde 3-phosphate. It carries out the reaction L-glutamyl-[protein] + S-adenosyl-L-methionine = [protein]-L-glutamate 5-O-methyl ester + S-adenosyl-L-homocysteine. Functionally, metal-dependent phosphatase that shows phosphatase activity against several substrates, including fructose-1-phosphate and fructose-6-phosphate. Its preference for fructose-1-phosphate, a strong glycating agent that causes DNA damage rather than a canonical yeast metabolite, suggests a damage-control function in hexose phosphate metabolism. Has also been shown to have O-methyltransferase activity that methylates glutamate residues of target proteins to form gamma-glutamyl methyl ester residues. Possibly methylates PCNA, suggesting it is involved in the DNA damage response. In Macaca fascicularis (Crab-eating macaque), this protein is Damage-control phosphatase ARMT1.